A 144-amino-acid chain; its full sequence is C-type isolectin Sp-CL4 (144 aa).

In terms of domain architecture, C-type lectin spans Asp27–Ala144. Intrachain disulfides connect Cys48-Cys143 and Cys119-Cys135.

This sequence belongs to the true venom lectin family. Glycosylated with a carbohydrate of 383 Da. In terms of tissue distribution, expressed by the venom gland.

It localises to the secreted. The role of this hemagglutinin in the venom is unknown, because it is masked by the high venom hemolytic activity. Lectin with specificity to galactose. Induces hemagglutination. In Scorpaena plumieri (Spotted scorpionfish), this protein is C-type isolectin Sp-CL4.